Consider the following 183-residue polypeptide: MQNSQAESWHGTTILTVRKGGRVVIGGDGQVSIGQTVIKSNARKVRKLGKGDVIGGFAGATADAFTLFERLEAKLEQYPGQLTRACVELAKDWRTDRYLRRLEAMMIVADKEVSLVLTGTGDVLEPEDGVMAIGSGGNYALAAARALSDSEHDAETIVRRSLEIAADICVYTNRNVTIEALTA.

The active site involves Thr12. Na(+)-binding residues include Ala166, Cys169, and Thr172.

This sequence belongs to the peptidase T1B family. HslV subfamily. A double ring-shaped homohexamer of HslV is capped on each side by a ring-shaped HslU homohexamer. The assembly of the HslU/HslV complex is dependent on binding of ATP.

The protein localises to the cytoplasm. It carries out the reaction ATP-dependent cleavage of peptide bonds with broad specificity.. With respect to regulation, allosterically activated by HslU binding. Protease subunit of a proteasome-like degradation complex believed to be a general protein degrading machinery. In Afipia carboxidovorans (strain ATCC 49405 / DSM 1227 / KCTC 32145 / OM5) (Oligotropha carboxidovorans), this protein is ATP-dependent protease subunit HslV.